Reading from the N-terminus, the 336-residue chain is DNA-directed RNA polymerase subunit alpha (336 aa).

The interval 1-226 (MLIAQRPTLS…ELFGLARELN (226 aa)) is alpha N-terminal domain (alpha-NTD). The alpha C-terminal domain (alpha-CTD) stretch occupies residues 243 to 336 (LAADMALPIE…SDDAFGDDEL (94 aa)).

This sequence belongs to the RNA polymerase alpha chain family. In terms of assembly, homodimer. The RNAP catalytic core consists of 2 alpha, 1 beta, 1 beta' and 1 omega subunit. When a sigma factor is associated with the core the holoenzyme is formed, which can initiate transcription.

It catalyses the reaction RNA(n) + a ribonucleoside 5'-triphosphate = RNA(n+1) + diphosphate. DNA-dependent RNA polymerase catalyzes the transcription of DNA into RNA using the four ribonucleoside triphosphates as substrates. The protein is DNA-directed RNA polymerase subunit alpha of Renibacterium salmoninarum (strain ATCC 33209 / DSM 20767 / JCM 11484 / NBRC 15589 / NCIMB 2235).